The primary structure comprises 390 residues: Ribosomal RNA large subunit methyltransferase G (390 aa).

Belongs to the methyltransferase superfamily. RlmG family.

The protein resides in the cytoplasm. It catalyses the reaction guanosine(1835) in 23S rRNA + S-adenosyl-L-methionine = N(2)-methylguanosine(1835) in 23S rRNA + S-adenosyl-L-homocysteine + H(+). In terms of biological role, specifically methylates the guanine in position 1835 (m2G1835) of 23S rRNA. The chain is Ribosomal RNA large subunit methyltransferase G from Alcanivorax borkumensis (strain ATCC 700651 / DSM 11573 / NCIMB 13689 / SK2).